A 222-amino-acid polypeptide reads, in one-letter code: Thiamine-phosphate synthase (222 aa).

4-amino-2-methyl-5-(diphosphooxymethyl)pyrimidine-binding positions include 42 to 46 (QYRDK) and asparagine 74. Residues aspartate 75 and aspartate 94 each coordinate Mg(2+). Threonine 113 is a 4-amino-2-methyl-5-(diphosphooxymethyl)pyrimidine binding site. 140–142 (SAT) contributes to the 2-[(2R,5Z)-2-carboxy-4-methylthiazol-5(2H)-ylidene]ethyl phosphate binding site. Lysine 143 lines the 4-amino-2-methyl-5-(diphosphooxymethyl)pyrimidine pocket. Glycine 169 contributes to the 2-[(2R,5Z)-2-carboxy-4-methylthiazol-5(2H)-ylidene]ethyl phosphate binding site.

This sequence belongs to the thiamine-phosphate synthase family. Mg(2+) is required as a cofactor.

It carries out the reaction 2-[(2R,5Z)-2-carboxy-4-methylthiazol-5(2H)-ylidene]ethyl phosphate + 4-amino-2-methyl-5-(diphosphooxymethyl)pyrimidine + 2 H(+) = thiamine phosphate + CO2 + diphosphate. The enzyme catalyses 2-(2-carboxy-4-methylthiazol-5-yl)ethyl phosphate + 4-amino-2-methyl-5-(diphosphooxymethyl)pyrimidine + 2 H(+) = thiamine phosphate + CO2 + diphosphate. The catalysed reaction is 4-methyl-5-(2-phosphooxyethyl)-thiazole + 4-amino-2-methyl-5-(diphosphooxymethyl)pyrimidine + H(+) = thiamine phosphate + diphosphate. The protein operates within cofactor biosynthesis; thiamine diphosphate biosynthesis; thiamine phosphate from 4-amino-2-methyl-5-diphosphomethylpyrimidine and 4-methyl-5-(2-phosphoethyl)-thiazole: step 1/1. Functionally, condenses 4-methyl-5-(beta-hydroxyethyl)thiazole monophosphate (THZ-P) and 2-methyl-4-amino-5-hydroxymethyl pyrimidine pyrophosphate (HMP-PP) to form thiamine monophosphate (TMP). The protein is Thiamine-phosphate synthase of Marinobacter nauticus (strain ATCC 700491 / DSM 11845 / VT8) (Marinobacter aquaeolei).